The chain runs to 333 residues: Holliday junction branch migration complex subunit RuvB (333 aa).

The segment at M1–Y182 is large ATPase domain (RuvB-L). Residues L21, R22, G63, K66, T67, T68, E129–Y131, R172, Y182, and R219 each bind ATP. Mg(2+) is bound at residue T67. The segment at E183–H253 is small ATPAse domain (RuvB-S). A head domain (RuvB-H) region spans residues A256–E333. R311 and R316 together coordinate DNA.

This sequence belongs to the RuvB family. Homohexamer. Forms an RuvA(8)-RuvB(12)-Holliday junction (HJ) complex. HJ DNA is sandwiched between 2 RuvA tetramers; dsDNA enters through RuvA and exits via RuvB. An RuvB hexamer assembles on each DNA strand where it exits the tetramer. Each RuvB hexamer is contacted by two RuvA subunits (via domain III) on 2 adjacent RuvB subunits; this complex drives branch migration. In the full resolvosome a probable DNA-RuvA(4)-RuvB(12)-RuvC(2) complex forms which resolves the HJ.

The protein resides in the cytoplasm. It carries out the reaction ATP + H2O = ADP + phosphate + H(+). Functionally, the RuvA-RuvB-RuvC complex processes Holliday junction (HJ) DNA during genetic recombination and DNA repair, while the RuvA-RuvB complex plays an important role in the rescue of blocked DNA replication forks via replication fork reversal (RFR). RuvA specifically binds to HJ cruciform DNA, conferring on it an open structure. The RuvB hexamer acts as an ATP-dependent pump, pulling dsDNA into and through the RuvAB complex. RuvB forms 2 homohexamers on either side of HJ DNA bound by 1 or 2 RuvA tetramers; 4 subunits per hexamer contact DNA at a time. Coordinated motions by a converter formed by DNA-disengaged RuvB subunits stimulates ATP hydrolysis and nucleotide exchange. Immobilization of the converter enables RuvB to convert the ATP-contained energy into a lever motion, pulling 2 nucleotides of DNA out of the RuvA tetramer per ATP hydrolyzed, thus driving DNA branch migration. The RuvB motors rotate together with the DNA substrate, which together with the progressing nucleotide cycle form the mechanistic basis for DNA recombination by continuous HJ branch migration. Branch migration allows RuvC to scan DNA until it finds its consensus sequence, where it cleaves and resolves cruciform DNA. The protein is Holliday junction branch migration complex subunit RuvB of Exiguobacterium sp. (strain ATCC BAA-1283 / AT1b).